A 332-amino-acid chain; its full sequence is DNA-directed RNA polymerase subunit alpha (332 aa).

Positions 1–234 (MIEYVIPKKL…NHLQIITDSL (234 aa)) are alpha N-terminal domain (alpha-NTD). The tract at residues 264–332 (AVYSKKIDEL…KFGLSLKKGG (69 aa)) is alpha C-terminal domain (alpha-CTD).

The protein belongs to the RNA polymerase alpha chain family. As to quaternary structure, homodimer. The RNAP catalytic core consists of 2 alpha, 1 beta, 1 beta' and 1 omega subunit. When a sigma factor is associated with the core the holoenzyme is formed, which can initiate transcription.

It carries out the reaction RNA(n) + a ribonucleoside 5'-triphosphate = RNA(n+1) + diphosphate. In terms of biological role, DNA-dependent RNA polymerase catalyzes the transcription of DNA into RNA using the four ribonucleoside triphosphates as substrates. This chain is DNA-directed RNA polymerase subunit alpha, found in Pseudothermotoga lettingae (strain ATCC BAA-301 / DSM 14385 / NBRC 107922 / TMO) (Thermotoga lettingae).